We begin with the raw amino-acid sequence, 598 residues long: MRQLVILSTMPPIQGGVLLNSQNFSKAKQFLGQEYPFALYDMRSENGICFNLEAFAIIVGTIQENGTLYLICPNWHSVEQQIDVDAIRWNGGVAIACPHFFQHFKRLINKFGFEVTSRPQQPFIKTAPSYPAKLIQFTDEQQNILQKLPLDPAEIHIITAARGRGKSTLAGKLAEQFAKTEQVILTAHRSSSIQKILQTASINIPFFAPDKLLNLIETKQISADHLLFIDEAACIPLPILQQLGNYFKKVILTTTTQNYEGTGRGFKLKLVKQLHRTTKEWQLFQPLRWSNHDRLEQFTNELLLLNDELIPLDQNSQFYHLLANAHYKTTATDLRRLFDADQQLFHQCYDKNQRLMAGIWAVKEGELSQDLAEAIWAGKRRPAGNLVAQYLCCQGNLIEACQLKSIRISRIAVQPDLQNQGIGSQLVTDFMQKMQKNNKNRPLDFISVSFGITPHLLTFWRRNGFQLVQITPTKEASSGYHSAMMLYPLSQQGKQFVTKAVKQFERDLALQPFYPTLKNCLAIPAQVENEMNQDDWQNLHGFAFAQRSLANCYTSLKRLYITHQAQLTILAPLFTHRYPANQKVWLQQCRIAIRPFIQ.

Residues glutamine 141, 163-172 (GRGKSTLAGK), and arginine 288 each bind ATP. Residues 332 to 490 (TDLRRLFDAD…HSAMMLYPLS (159 aa)) form the N-acetyltransferase domain. Residues 411–413 (IAV), 418–424 (QNQGIGS), and arginine 462 contribute to the acetyl-CoA site.

The protein belongs to the RNA cytidine acetyltransferase family. TmcA subfamily.

The protein localises to the cytoplasm. The enzyme catalyses cytidine(34) in elongator tRNA(Met) + acetyl-CoA + ATP + H2O = N(4)-acetylcytidine(34) in elongator tRNA(Met) + ADP + phosphate + CoA + H(+). Catalyzes the formation of N(4)-acetylcytidine (ac(4)C) at the wobble position of tRNA(Met), by using acetyl-CoA as an acetyl donor and ATP (or GTP). The sequence is that of tRNA(Met) cytidine acetyltransferase TmcA from Haemophilus ducreyi (strain 35000HP / ATCC 700724).